A 409-amino-acid chain; its full sequence is Lissencephaly-1 homolog (409 aa).

A LisH domain is found at 7–39 (QEEELRFAVADYLQSCGYTNALEAFKKDASIPK). A coiled-coil region spans residues 56–81 (SVVRLQKKVMDLELRLNNTTREMNSG). The segment covering 75-92 (TREMNSGVPTRNSRSSND) has biased composition (polar residues). The disordered stretch occupies residues 75-105 (TREMNSGVPTRNSRSSNDWIPRPPEKHSLSG). WD repeat units lie at residues 105–146 (GHRS…RTLR), 147–186 (GHTDSVQDLAFDSSGKLLASSSADMTVKIWDFQTFECRMT), 189–228 (GHDHNVSSVCFLPSGDFLLSSSRDKTIKMWEVATGYCVYN), 231–270 (GHREWVRRVAVASDGSLMASCSNDQTVRIWSLSSKECKEE), 273–332 (GHEH…CLFS), 335–374 (GHDNWVRGLAFHAGGKYLTSASDDKTIKIWELRHKRCSKS), and 377–409 (AHNHFVTTIDFHRSSPFVITGSVDLTIKVWECR).

It belongs to the WD repeat LIS1/nudF family.

The protein localises to the cytoplasm. Its subcellular location is the cytoskeleton. It localises to the microtubule organizing center. The protein resides in the centrosome. In terms of biological role, positively regulates the activity of the minus-end directed microtubule motor protein dynein. May enhance dynein-mediated microtubule sliding by targeting dynein to the microtubule plus end. Required for several dynein- and microtubule-dependent processes. This Trichoplax adhaerens (Trichoplax reptans) protein is Lissencephaly-1 homolog.